The following is a 64-amino-acid chain: Large ribosomal subunit protein bL28 (64 aa).

The protein belongs to the bacterial ribosomal protein bL28 family.

The protein is Large ribosomal subunit protein bL28 (rpmB) of Mycobacterium leprae (strain TN).